The sequence spans 122 residues: UPF0145 protein Bmul_3577/BMULJ_04940 (122 aa).

The protein belongs to the UPF0145 family.

The sequence is that of UPF0145 protein Bmul_3577/BMULJ_04940 from Burkholderia multivorans (strain ATCC 17616 / 249).